Reading from the N-terminus, the 97-residue chain is Protein E7 (97 aa).

An E7 terminal domain region spans residues 1 to 44 (MHGKKPSVQDIVLDLKPTTETDLTCYESLDNSEDEDETDSHLER). The LXCXE motif; interaction with host RB1 and TMEM173/STING motif lies at 23–27 (LTCYE). Residues 57–93 (CSRCQSTVCLTIESTHADLLVLEDLLMGALKIVCPNC) fold into a zinc finger. Positions 75–83 (LLVLEDLLM) match the Nuclear export signal motif.

The protein belongs to the papillomaviridae E7 protein family. Homodimer. Homooligomer. Interacts with host RB1; this interaction induces dissociation of RB1-E2F1 complex thereby disrupting RB1 activity. Interacts with host EP300; this interaction represses EP300 transcriptional activity. Interacts with protein E2; this interaction inhibits E7 oncogenic activity. Interacts with host TMEM173/STING; this interaction impairs the ability of TMEM173/STING to sense cytosolic DNA and promote the production of type I interferon (IFN-alpha and IFN-beta). In terms of processing, highly phosphorylated.

The protein resides in the host cytoplasm. It localises to the host nucleus. Its function is as follows. Plays a role in viral genome replication by driving entry of quiescent cells into the cell cycle. Stimulation of progression from G1 to S phase allows the virus to efficiently use the cellular DNA replicating machinery to achieve viral genome replication. E7 protein has both transforming and trans-activating activities. Induces the disassembly of the E2F1 transcription factor from RB1, with subsequent transcriptional activation of E2F1-regulated S-phase genes. Interferes with host histone deacetylation mediated by HDAC1 and HDAC2, leading to transcription activation. Also plays a role in the inhibition of both antiviral and antiproliferative functions of host interferon alpha. Interaction with host TMEM173/STING impairs the ability of TMEM173/STING to sense cytosolic DNA and promote the production of type I interferon (IFN-alpha and IFN-beta). The chain is Protein E7 from Human papillomavirus type 34.